Consider the following 234-residue polypeptide: Sugar fermentation stimulation protein A (234 aa).

The segment at residues 201–220 (LLSEAQQRGVEILAYKAEIS) is a DNA-binding region (H-T-H motif).

It belongs to the SfsA family.

In terms of biological role, binds to DNA non-specifically. Could be a regulatory factor involved in maltose metabolism. This chain is Sugar fermentation stimulation protein A, found in Shigella flexneri.